Here is a 344-residue protein sequence, read N- to C-terminus: MALDKSKALDTAVSQIERQFGKGSIMRMGDRASQKVASISTGSLALDLALGVGGVPRGRIVEIFGPESSGKTTLALHIIAEAQRAGGLAAFIDAEHALDPTYAEAIGVDLENLYFSQPDSGEQALEIADTLVRSGALDAVVIDSVAALVPRAEIEGEMGDSHVGLQARLMSQALRKLSGSLSRSGTTAIFINQLREKIGVMFGSPETTPGGRALKFYASVRMDIRRIGALKAGNETVGNQTRVKIVKNKVAPPFKEVTFDIMYGEGISREGSLLDVGIEQGVIQKSGAWFAYGEERIGQGRENARKFLKEHPEIRDRITREVYERLGLGGEEREELEGRAEPVL.

65-72 (GPESSGKT) provides a ligand contact to ATP.

This sequence belongs to the RecA family.

It localises to the cytoplasm. Functionally, can catalyze the hydrolysis of ATP in the presence of single-stranded DNA, the ATP-dependent uptake of single-stranded DNA by duplex DNA, and the ATP-dependent hybridization of homologous single-stranded DNAs. It interacts with LexA causing its activation and leading to its autocatalytic cleavage. This is Protein RecA from Rubrobacter xylanophilus (strain DSM 9941 / JCM 11954 / NBRC 16129 / PRD-1).